Here is a 679-residue protein sequence, read N- to C-terminus: Methionine--tRNA ligase (679 aa).

The short motif at 15–25 (PYANGPVHIGH) is the 'HIGH' region element. 4 residues coordinate Zn(2+): Cys-147, Cys-150, Cys-160, and Cys-163. Positions 332-336 (KISTS) match the 'KMSKS' region motif. Residue Thr-335 coordinates ATP. One can recognise a tRNA-binding domain in the interval 578 to 679 (DFMKLDIRVG…REVKPGSEVK (102 aa)).

The protein belongs to the class-I aminoacyl-tRNA synthetase family. MetG type 1 subfamily. Homodimer. Requires Zn(2+) as cofactor.

Its subcellular location is the cytoplasm. The enzyme catalyses tRNA(Met) + L-methionine + ATP = L-methionyl-tRNA(Met) + AMP + diphosphate. Its function is as follows. Is required not only for elongation of protein synthesis but also for the initiation of all mRNA translation through initiator tRNA(fMet) aminoacylation. The sequence is that of Methionine--tRNA ligase from Bacteroides fragilis (strain ATCC 25285 / DSM 2151 / CCUG 4856 / JCM 11019 / LMG 10263 / NCTC 9343 / Onslow / VPI 2553 / EN-2).